A 276-amino-acid polypeptide reads, in one-letter code: Putative metal-binding protein CT_415 (276 aa).

Positions 1-18 (MRLLFLLLFSLGITCSYG) are cleaved as a signal peptide. A divalent metal cation contacts are provided by His-59, His-121, His-185, and Asp-256.

Belongs to the bacterial solute-binding protein 9 family.

It localises to the periplasm. Functionally, part of an ATP-binding cassette (ABC) transport system involved in metal import. Binds a metal with high affinity and specificity and delivers it to the membrane permease for translocation into the cytoplasm. The sequence is that of Putative metal-binding protein CT_415 from Chlamydia trachomatis serovar D (strain ATCC VR-885 / DSM 19411 / UW-3/Cx).